Here is a 347-residue protein sequence, read N- to C-terminus: GMP reductase (347 aa).

Position 108-131 (108-131 (TDFIKLSEILAKSEDLNFICIDIA)) interacts with NADP(+). G181 and G183 together coordinate K(+). Residue C186 is the Thioimidate intermediate of the active site. 216–239 (IIGDGGCSCAGDVAKAFGGGADFV) serves as a coordination point for NADP(+).

This sequence belongs to the IMPDH/GMPR family. GuaC type 1 subfamily. Homotetramer.

It catalyses the reaction IMP + NH4(+) + NADP(+) = GMP + NADPH + 2 H(+). Functionally, catalyzes the irreversible NADPH-dependent deamination of GMP to IMP. It functions in the conversion of nucleobase, nucleoside and nucleotide derivatives of G to A nucleotides, and in maintaining the intracellular balance of A and G nucleotides. This is GMP reductase from Shewanella pealeana (strain ATCC 700345 / ANG-SQ1).